Consider the following 312-residue polypeptide: tRNA U34 carboxymethyltransferase (312 aa).

Carboxy-S-adenosyl-L-methionine contacts are provided by residues lysine 88, tryptophan 102, lysine 107, glycine 127, 149–151, 177–178, methionine 191, tyrosine 195, and arginine 304; these read DPS and LD.

This sequence belongs to the class I-like SAM-binding methyltransferase superfamily. CmoB family. In terms of assembly, homotetramer.

It carries out the reaction carboxy-S-adenosyl-L-methionine + 5-hydroxyuridine(34) in tRNA = 5-carboxymethoxyuridine(34) in tRNA + S-adenosyl-L-homocysteine + H(+). Functionally, catalyzes carboxymethyl transfer from carboxy-S-adenosyl-L-methionine (Cx-SAM) to 5-hydroxyuridine (ho5U) to form 5-carboxymethoxyuridine (cmo5U) at position 34 in tRNAs. The protein is tRNA U34 carboxymethyltransferase of Dichelobacter nodosus (strain VCS1703A).